We begin with the raw amino-acid sequence, 266 residues long: Non-structural maintenance of chromosomes element 1 homolog (266 aa).

The interval 1–102 (MQGNTRRTGV…SVSKMASDFA (102 aa)) is interaction with NSMCE3. Residues 191-232 (CNICRSLLIQGQSCETCGIRMHLPCVAKYFQSSSEPHCPHCN) form an RING-type; atypical zinc finger. A compositionally biased stretch (basic and acidic residues) spans 243-252 (FDPEKERETG). Positions 243–266 (FDPEKERETGMSRSNKRPSRSRQH) are disordered. Positions 256–266 (SNKRPSRSRQH) are enriched in basic residues.

Belongs to the NSE1 family. In terms of assembly, component of the SMC5-SMC6 complex which consists at least of SMC5, SMC6, NSMCE2, NSMCE1, NSMCE4A or EID3 and NSMCE3. NSMCE1, NSMCE4A or EID3 and NSMCE3 probably form a subcomplex that bridges the head domains of the SMC5-SMC6 heterodimer. Interacts with NSMCE3. In terms of processing, ubiquitinated.

It is found in the nucleus. The protein resides in the chromosome. It localises to the telomere. The catalysed reaction is S-ubiquitinyl-[E2 ubiquitin-conjugating enzyme]-L-cysteine + [acceptor protein]-L-lysine = [E2 ubiquitin-conjugating enzyme]-L-cysteine + N(6)-ubiquitinyl-[acceptor protein]-L-lysine.. Functionally, RING-type zinc finger-containing E3 ubiquitin ligase that assembles with melanoma antigen protein (MAGE) to catalyze the direct transfer of ubiquitin from E2 ubiquitin-conjugating enzyme to a specific substrate. Within MAGE-RING ubiquitin ligase complex, MAGE stimulates and specifies ubiquitin ligase activity likely through recruitment and/or stabilization of the E2 ubiquitin-conjugating enzyme at the E3:substrate complex. Involved in maintenance of genome integrity, DNA damage response and DNA repair. NSMCE3/MAGEG1 and NSMCE1 ubiquitin ligase are components of SMC5-SMC6 complex and may positively regulate homologous recombination-mediated DNA repair. The sequence is that of Non-structural maintenance of chromosomes element 1 homolog (NSMCE1) from Bos taurus (Bovine).